Consider the following 218-residue polypeptide: MFGFLKQVGDYTRDAVDAARNLTQGLAVTFDHMKRRPVTVQYPYEKLIPSERYRGRIHYEFDKCIACEVCVRVCPINLPVVDWVMNKETKKKELRNYSIDFGVCIFCGNCVEYCPTNCLSMTEEYELAAFDRHSLNFDNVALGRLPTSVTTDPAVQPLRELAYLPAGEVQPHGVDPSRPRAGQRPDQVLSSLKQNAGGSAGNEGESATSTNTSKGSAE.

4Fe-4S ferredoxin-type domains lie at 55-84 and 95-124; these read GRIH…VDWV and RNYS…MTEE. Residues Cys-64, Cys-67, Cys-70, Cys-74, Cys-104, Cys-107, Cys-110, and Cys-114 each coordinate [4Fe-4S] cluster. Residues 168 to 218 are disordered; the sequence is EVQPHGVDPSRPRAGQRPDQVLSSLKQNAGGSAGNEGESATSTNTSKGSAE. Residues 208–218 are compositionally biased toward polar residues; the sequence is TSTNTSKGSAE.

This sequence belongs to the complex I 23 kDa subunit family. NDH-1 is composed of at least 11 different subunits. Requires [4Fe-4S] cluster as cofactor.

It localises to the cellular thylakoid membrane. The catalysed reaction is a plastoquinone + NADH + (n+1) H(+)(in) = a plastoquinol + NAD(+) + n H(+)(out). The enzyme catalyses a plastoquinone + NADPH + (n+1) H(+)(in) = a plastoquinol + NADP(+) + n H(+)(out). NDH-1 shuttles electrons from an unknown electron donor, via FMN and iron-sulfur (Fe-S) centers, to quinones in the respiratory and/or the photosynthetic chain. The immediate electron acceptor for the enzyme in this species is believed to be plastoquinone. Couples the redox reaction to proton translocation, and thus conserves the redox energy in a proton gradient. This Synechococcus sp. (strain WH7803) protein is NAD(P)H-quinone oxidoreductase subunit I.